The following is a 281-amino-acid chain: NADPH-dependent 7-cyano-7-deazaguanine reductase (281 aa).

88–90 contacts substrate; it reads IES. 90 to 91 serves as a coordination point for NADPH; the sequence is SK. Catalysis depends on cysteine 189, which acts as the Thioimide intermediate. The Proton donor role is filled by aspartate 196. Position 228–229 (228–229) interacts with substrate; it reads HE. 257-258 provides a ligand contact to NADPH; the sequence is RG.

It belongs to the GTP cyclohydrolase I family. QueF type 2 subfamily. As to quaternary structure, homodimer.

The protein resides in the cytoplasm. The enzyme catalyses 7-aminomethyl-7-carbaguanine + 2 NADP(+) = 7-cyano-7-deazaguanine + 2 NADPH + 3 H(+). It functions in the pathway tRNA modification; tRNA-queuosine biosynthesis. Catalyzes the NADPH-dependent reduction of 7-cyano-7-deazaguanine (preQ0) to 7-aminomethyl-7-deazaguanine (preQ1). The protein is NADPH-dependent 7-cyano-7-deazaguanine reductase of Erwinia tasmaniensis (strain DSM 17950 / CFBP 7177 / CIP 109463 / NCPPB 4357 / Et1/99).